The sequence spans 860 residues: DNA mismatch repair protein MutS (860 aa).

607-614 (GPNMSGKS) is an ATP binding site.

It belongs to the DNA mismatch repair MutS family.

This protein is involved in the repair of mismatches in DNA. It is possible that it carries out the mismatch recognition step. This protein has a weak ATPase activity. The chain is DNA mismatch repair protein MutS from Listeria monocytogenes serovar 1/2a (strain ATCC BAA-679 / EGD-e).